The sequence spans 100 residues: NADH-quinone oxidoreductase subunit K (100 aa).

The next 3 membrane-spanning stretches (helical) occupy residues 4–24, 28–48, and 60–80; these read LTHG…GLVI, LLFM…AFVV, and IMYI…LALL.

It belongs to the complex I subunit 4L family. As to quaternary structure, NDH-1 is composed of 13 different subunits. Subunits NuoA, H, J, K, L, M, N constitute the membrane sector of the complex.

It is found in the cell inner membrane. The catalysed reaction is a quinone + NADH + 5 H(+)(in) = a quinol + NAD(+) + 4 H(+)(out). In terms of biological role, NDH-1 shuttles electrons from NADH, via FMN and iron-sulfur (Fe-S) centers, to quinones in the respiratory chain. The immediate electron acceptor for the enzyme in this species is believed to be ubiquinone. Couples the redox reaction to proton translocation (for every two electrons transferred, four hydrogen ions are translocated across the cytoplasmic membrane), and thus conserves the redox energy in a proton gradient. This chain is NADH-quinone oxidoreductase subunit K, found in Klebsiella pneumoniae (strain 342).